The chain runs to 428 residues: Methyl-branched lipid omega-hydroxylase (428 aa).

Cysteine 379 lines the heme pocket.

Belongs to the cytochrome P450 family. Heme is required as a cofactor.

It carries out the reaction a methyl-branched lipid + O2 + 2 reduced ferredoxin [iron-sulfur] cluster + 2 H(+) = an omega-hydroxy-methyl-branched lipid + H2O + 2 oxidized ferredoxin [iron-sulfur] cluster.. It catalyses the reaction cholest-4-en-3-one + 6 reduced [2Fe-2S]-[ferredoxin] + 3 O2 + 5 H(+) = (25R)-3-oxocholest-4-en-26-oate + 6 oxidized [2Fe-2S]-[ferredoxin] + 4 H2O. Its pathway is lipid metabolism; branched-chain fatty acid metabolism. In terms of biological role, primarily hydroxylates the omega-carbon of a number of methyl-branched lipids, including (2E,6E)-farnesol, phytanate, geranylgeraniol, 15-methylpalmitate and (2E,6E)-farnesyl diphosphate. Also catalyzes the sequential oxidation of the terminal methyl of cholest-4-en-3-one into (25R)-26-hydroxycholest-4-en-3-one (alcohol), (25R)-26-oxocholest-4-en-3-one (aldehyde), to finally yield the carboxylic acid (25R)-3-oxocholest-4-en-26-oate. Also able to sequentially oxidize cholesterol itself, not only cholest-4-en-3-one. This Mycobacterium tuberculosis (strain CDC 1551 / Oshkosh) protein is Methyl-branched lipid omega-hydroxylase (cyp124).